The chain runs to 204 residues: Guanylate kinase (204 aa).

Positions 18–196 constitute a Guanylate kinase-like domain; the sequence is PKLFTISAPA…SYEVLKSIFI (179 aa). Residue 25 to 32 participates in ATP binding; it reads APAGAGKT.

The protein belongs to the guanylate kinase family.

The protein resides in the cytoplasm. It catalyses the reaction GMP + ATP = GDP + ADP. In terms of biological role, essential for recycling GMP and indirectly, cGMP. The sequence is that of Guanylate kinase from Chlamydia abortus (strain DSM 27085 / S26/3) (Chlamydophila abortus).